The chain runs to 78 residues: Small ribosomal subunit protein bS18 (78 aa).

This sequence belongs to the bacterial ribosomal protein bS18 family. Part of the 30S ribosomal subunit. Forms a tight heterodimer with protein bS6.

Binds as a heterodimer with protein bS6 to the central domain of the 16S rRNA, where it helps stabilize the platform of the 30S subunit. This chain is Small ribosomal subunit protein bS18, found in Limosilactobacillus reuteri (strain DSM 20016) (Lactobacillus reuteri).